A 318-amino-acid polypeptide reads, in one-letter code: Serpentine receptor class delta-25 (318 aa).

7 consecutive transmembrane segments (helical) span residues 5–25 (LLHS…MYLA), 38–58 (VVIT…FFVM), 88–108 (HMFM…SYLF), 126–146 (IAFY…SIYI), 176–196 (ITLL…YTFI), 226–246 (TFKL…VAMF), and 258–278 (IVSV…IIFV).

It belongs to the nematode receptor-like protein srd family.

The protein localises to the membrane. The chain is Serpentine receptor class delta-25 (srd-25) from Caenorhabditis elegans.